We begin with the raw amino-acid sequence, 385 residues long: Phospho-N-acetylmuramoyl-pentapeptide-transferase (385 aa).

10 helical membrane-spanning segments follow: residues 23–43 (FITV…LGAG), 79–99 (MGGI…GAVA), 103–123 (VWLS…DDYV), 135–155 (AWYK…VLYF), 186–206 (LGVD…VTAV), 218–238 (GLTT…VYVS), 258–278 (LTVF…YNGY), 282–302 (VFMG…TILM), 307–327 (LLLP…IVQT), and 362–382 (KIVT…LLIL).

It belongs to the glycosyltransferase 4 family. MraY subfamily. Requires Mg(2+) as cofactor.

It localises to the cell inner membrane. The catalysed reaction is UDP-N-acetyl-alpha-D-muramoyl-L-alanyl-gamma-D-glutamyl-meso-2,6-diaminopimeloyl-D-alanyl-D-alanine + di-trans,octa-cis-undecaprenyl phosphate = di-trans,octa-cis-undecaprenyl diphospho-N-acetyl-alpha-D-muramoyl-L-alanyl-D-glutamyl-meso-2,6-diaminopimeloyl-D-alanyl-D-alanine + UMP. It functions in the pathway cell wall biogenesis; peptidoglycan biosynthesis. Catalyzes the initial step of the lipid cycle reactions in the biosynthesis of the cell wall peptidoglycan: transfers peptidoglycan precursor phospho-MurNAc-pentapeptide from UDP-MurNAc-pentapeptide onto the lipid carrier undecaprenyl phosphate, yielding undecaprenyl-pyrophosphoryl-MurNAc-pentapeptide, known as lipid I. The protein is Phospho-N-acetylmuramoyl-pentapeptide-transferase of Salinibacter ruber (strain DSM 13855 / M31).